We begin with the raw amino-acid sequence, 237 residues long: 2-C-methyl-D-erythritol 4-phosphate cytidylyltransferase (237 aa).

The protein belongs to the IspD/TarI cytidylyltransferase family. IspD subfamily. As to quaternary structure, homodimer.

It carries out the reaction 2-C-methyl-D-erythritol 4-phosphate + CTP + H(+) = 4-CDP-2-C-methyl-D-erythritol + diphosphate. It participates in isoprenoid biosynthesis; isopentenyl diphosphate biosynthesis via DXP pathway; isopentenyl diphosphate from 1-deoxy-D-xylulose 5-phosphate: step 2/6. Its function is as follows. Catalyzes the formation of 4-diphosphocytidyl-2-C-methyl-D-erythritol from CTP and 2-C-methyl-D-erythritol 4-phosphate (MEP). This is 2-C-methyl-D-erythritol 4-phosphate cytidylyltransferase from Pectobacterium atrosepticum (strain SCRI 1043 / ATCC BAA-672) (Erwinia carotovora subsp. atroseptica).